The following is a 208-amino-acid chain: 3-demethoxyubiquinol 3-hydroxylase (208 aa).

Glu57, Glu87, His90, Glu139, Glu171, and His174 together coordinate Fe cation.

It belongs to the COQ7 family. Fe cation is required as a cofactor.

It is found in the cell membrane. The catalysed reaction is a 5-methoxy-2-methyl-3-(all-trans-polyprenyl)benzene-1,4-diol + AH2 + O2 = a 3-demethylubiquinol + A + H2O. It functions in the pathway cofactor biosynthesis; ubiquinone biosynthesis. In terms of biological role, catalyzes the hydroxylation of 2-nonaprenyl-3-methyl-6-methoxy-1,4-benzoquinol during ubiquinone biosynthesis. The protein is 3-demethoxyubiquinol 3-hydroxylase of Nitrosomonas eutropha (strain DSM 101675 / C91 / Nm57).